Consider the following 286-residue polypeptide: 4-hydroxybenzoate octaprenyltransferase (286 aa).

7 consecutive transmembrane segments (helical) span residues 21–40, 95–115, 142–162, 167–187, 211–231, 235–255, and 266–286; these read GTLL…AGGM, ILFV…NGLV, FLGV…TGEV, WWLF…YAMV, IIGL…WSAE, LYGL…MLIF, and FLNN…DYLI.

This sequence belongs to the UbiA prenyltransferase family. Requires Mg(2+) as cofactor.

It localises to the cell inner membrane. The enzyme catalyses all-trans-octaprenyl diphosphate + 4-hydroxybenzoate = 4-hydroxy-3-(all-trans-octaprenyl)benzoate + diphosphate. The protein operates within cofactor biosynthesis; ubiquinone biosynthesis. Its function is as follows. Catalyzes the prenylation of para-hydroxybenzoate (PHB) with an all-trans polyprenyl group. Mediates the second step in the final reaction sequence of ubiquinone-8 (UQ-8) biosynthesis, which is the condensation of the polyisoprenoid side chain with PHB, generating the first membrane-bound Q intermediate 3-octaprenyl-4-hydroxybenzoate. This is 4-hydroxybenzoate octaprenyltransferase from Shewanella putrefaciens (strain CN-32 / ATCC BAA-453).